The primary structure comprises 112 residues: Putative galactitol utilization operon repressor (112 aa).

Residues 5 to 60 (SFERRNKIIQLVNEQGTVLVQDLAGVFAASEATIRADLRFLEQKGVVTRFHGGAAK) form the HTH deoR-type domain. Positions 22-41 (VLVQDLAGVFAASEATIRAD) form a DNA-binding region, H-T-H motif.

Its function is as follows. Repressor of the gat operon for galacticol transport and metabolism. In K12 strains the operon is constitutively expressed because this gene is inactive. The polypeptide is Putative galactitol utilization operon repressor (gatR) (Escherichia coli (strain K12)).